The primary structure comprises 576 residues: 9-cis-epoxycarotenoid dioxygenase NCED2, chloroplastic (576 aa).

A chloroplast-targeting transit peptide spans 1–34 (MEVPIAAMTFAHPANVMTLASRQPKSKRSHISPA). Fe cation is bound by residues H270, H319, H385, and H563.

The protein belongs to the carotenoid oxygenase family. Requires Fe(2+) as cofactor.

Its subcellular location is the plastid. It is found in the chloroplast. It catalyses the reaction a 9-cis-epoxycarotenoid + O2 = a 12'-apo-carotenal + 2-cis,4-trans-xanthoxin. The catalysed reaction is 9-cis-violaxanthin + O2 = (3S,5R,6S)-5,6-epoxy-3-hydroxy-5,6-dihydro-12'-apo-beta-caroten-12'-al + 2-cis,4-trans-xanthoxin. It carries out the reaction 9'-cis-neoxanthin + O2 = (3S,5R,6R)-3,5-dihydroxy-6,7-didehydro-5,6-dihydro-12'-apo-beta-caroten-12'-al + 2-cis,4-trans-xanthoxin. In terms of biological role, has a 11,12(11',12') 9-cis epoxycarotenoid cleavage activity. Catalyzes the first step of abscisic-acid biosynthesis from carotenoids. The sequence is that of 9-cis-epoxycarotenoid dioxygenase NCED2, chloroplastic from Oryza sativa subsp. japonica (Rice).